The chain runs to 528 residues: Glucose-6-phosphate isomerase (528 aa).

Glu322 functions as the Proton donor in the catalytic mechanism. Residues His351 and Lys455 contribute to the active site.

This sequence belongs to the GPI family.

It localises to the cytoplasm. The catalysed reaction is alpha-D-glucose 6-phosphate = beta-D-fructose 6-phosphate. It functions in the pathway carbohydrate biosynthesis; gluconeogenesis. Its pathway is carbohydrate degradation; glycolysis; D-glyceraldehyde 3-phosphate and glycerone phosphate from D-glucose: step 2/4. Functionally, catalyzes the reversible isomerization of glucose-6-phosphate to fructose-6-phosphate. The protein is Glucose-6-phosphate isomerase of Nostoc punctiforme (strain ATCC 29133 / PCC 73102).